The sequence spans 333 residues: L-lactate dehydrogenase A chain (333 aa).

Residues 30–58 (GAVG…IEDK) and arginine 100 contribute to the NAD(+) site. 3 residues coordinate substrate: arginine 107, asparagine 139, and arginine 170. Asparagine 139 serves as a coordination point for NAD(+). The Proton acceptor role is filled by histidine 194. A substrate-binding site is contributed by threonine 249.

It belongs to the LDH/MDH superfamily. LDH family. As to quaternary structure, homotetramer.

Its subcellular location is the cytoplasm. It catalyses the reaction (S)-lactate + NAD(+) = pyruvate + NADH + H(+). It functions in the pathway fermentation; pyruvate fermentation to lactate; (S)-lactate from pyruvate: step 1/1. Interconverts simultaneously and stereospecifically pyruvate and lactate with concomitant interconversion of NADH and NAD(+). The chain is L-lactate dehydrogenase A chain (LDHA) from Ambystoma mexicanum (Axolotl).